The primary structure comprises 228 residues: Phosphoribosylformylglycinamidine synthase subunit PurQ (228 aa).

The Glutamine amidotransferase type-1 domain occupies 2 to 225; it reads KAAVISFPGS…INQTEGADVR (224 aa). The active-site Nucleophile is Cys86. Residues His194 and Glu196 contribute to the active site.

As to quaternary structure, part of the FGAM synthase complex composed of 1 PurL, 1 PurQ and 2 PurS subunits.

Its subcellular location is the cytoplasm. The catalysed reaction is N(2)-formyl-N(1)-(5-phospho-beta-D-ribosyl)glycinamide + L-glutamine + ATP + H2O = 2-formamido-N(1)-(5-O-phospho-beta-D-ribosyl)acetamidine + L-glutamate + ADP + phosphate + H(+). It catalyses the reaction L-glutamine + H2O = L-glutamate + NH4(+). It functions in the pathway purine metabolism; IMP biosynthesis via de novo pathway; 5-amino-1-(5-phospho-D-ribosyl)imidazole from N(2)-formyl-N(1)-(5-phospho-D-ribosyl)glycinamide: step 1/2. Part of the phosphoribosylformylglycinamidine synthase complex involved in the purines biosynthetic pathway. Catalyzes the ATP-dependent conversion of formylglycinamide ribonucleotide (FGAR) and glutamine to yield formylglycinamidine ribonucleotide (FGAM) and glutamate. The FGAM synthase complex is composed of three subunits. PurQ produces an ammonia molecule by converting glutamine to glutamate. PurL transfers the ammonia molecule to FGAR to form FGAM in an ATP-dependent manner. PurS interacts with PurQ and PurL and is thought to assist in the transfer of the ammonia molecule from PurQ to PurL. This Lacticaseibacillus casei (strain BL23) (Lactobacillus casei) protein is Phosphoribosylformylglycinamidine synthase subunit PurQ.